The sequence spans 321 residues: Citrate synthase (321 aa).

Active-site residues include histidine 248 and aspartate 306.

This sequence belongs to the citrate synthase family.

The enzyme catalyses oxaloacetate + acetyl-CoA + H2O = citrate + CoA + H(+). It functions in the pathway carbohydrate metabolism; tricarboxylic acid cycle; isocitrate from oxaloacetate: step 1/2. In Bartonella elizabethae (Rochalimaea elizabethae), this protein is Citrate synthase (gltA).